A 965-amino-acid chain; its full sequence is Isoleucine--tRNA ligase (965 aa).

Residues 68–78 (PYANGSLHMGH) carry the 'HIGH' region motif. Glutamate 582 provides a ligand contact to L-isoleucyl-5'-AMP. The 'KMSKS' region signature appears at 623–627 (KMSKS). Lysine 626 serves as a coordination point for ATP. 4 residues coordinate Zn(2+): cysteine 936, cysteine 939, cysteine 956, and cysteine 959.

It belongs to the class-I aminoacyl-tRNA synthetase family. IleS type 1 subfamily. In terms of assembly, monomer. Requires Zn(2+) as cofactor.

It localises to the cytoplasm. The enzyme catalyses tRNA(Ile) + L-isoleucine + ATP = L-isoleucyl-tRNA(Ile) + AMP + diphosphate. In terms of biological role, catalyzes the attachment of isoleucine to tRNA(Ile). As IleRS can inadvertently accommodate and process structurally similar amino acids such as valine, to avoid such errors it has two additional distinct tRNA(Ile)-dependent editing activities. One activity is designated as 'pretransfer' editing and involves the hydrolysis of activated Val-AMP. The other activity is designated 'posttransfer' editing and involves deacylation of mischarged Val-tRNA(Ile). In Prochlorococcus marinus (strain MIT 9515), this protein is Isoleucine--tRNA ligase.